The following is a 313-amino-acid chain: Probable 5-dehydro-4-deoxyglucarate dehydratase (313 aa).

Belongs to the DapA family.

It carries out the reaction 5-dehydro-4-deoxy-D-glucarate + H(+) = 2,5-dioxopentanoate + CO2 + H2O. It participates in carbohydrate acid metabolism; D-glucarate degradation; 2,5-dioxopentanoate from D-glucarate: step 2/2. This is Probable 5-dehydro-4-deoxyglucarate dehydratase from Bradyrhizobium sp. (strain BTAi1 / ATCC BAA-1182).